The primary structure comprises 466 residues: Ras-GEF domain-containing family member 1C (466 aa).

The span at 1–23 shows a compositional bias: polar residues; the sequence is MPQTLSASDMVTPGSLSPPTTEP. 2 disordered regions span residues 1–35 and 443–466; these read MPQT…PLLD and SESP…LGKT. The N-terminal Ras-GEF domain occupies 34 to 164; that stretch reads LDGAPSSASL…LLQALHQKLA (131 aa). A Ras-GEF domain is found at 200-446; sequence DPYTLAQQLT…YLASYESESP (247 aa).

Its function is as follows. Guanine nucleotide exchange factor (GEF). This is Ras-GEF domain-containing family member 1C (RASGEF1C) from Macaca fascicularis (Crab-eating macaque).